The chain runs to 466 residues: Putative chitinase (466 aa).

Positions 1-17 (MYLTIWLVSILALGTWG) are cleaved as a signal peptide. One can recognise a GH18 domain in the interval 20-380 (FNRFCHYNSW…MAVIHGLNAY (361 aa)). A disulfide bridge links C24 with C49. E141 acts as the Proton donor in catalysis. Residues 408-442 (NYRRRNQQEKVAEMEQRIRHLEQELQQSMGNMAYE) are a coiled coil.

It belongs to the glycosyl hydrolase 18 family. Prismatic layer of shell (at protein level). Expressed primarily in the mantle with highest level in the mantle edge and lower level in the mantle pallium.

It localises to the secreted. The enzyme catalyses Random endo-hydrolysis of N-acetyl-beta-D-glucosaminide (1-&gt;4)-beta-linkages in chitin and chitodextrins.. This chain is Putative chitinase, found in Pinctada maxima (Silver-lipped pearl oyster).